The sequence spans 914 residues: Protein translocase subunit SecA (914 aa).

ATP-binding positions include Q87, 105 to 109 (GEGKT), and D508. Zn(2+) contacts are provided by C898, C900, C909, and H910.

Belongs to the SecA family. In terms of assembly, monomer and homodimer. Part of the essential Sec protein translocation apparatus which comprises SecA, SecYEG and auxiliary proteins SecDF-YajC and YidC. Requires Zn(2+) as cofactor.

The protein localises to the cell inner membrane. It localises to the cytoplasm. It carries out the reaction ATP + H2O + cellular proteinSide 1 = ADP + phosphate + cellular proteinSide 2.. In terms of biological role, part of the Sec protein translocase complex. Interacts with the SecYEG preprotein conducting channel. Has a central role in coupling the hydrolysis of ATP to the transfer of proteins into and across the cell membrane, serving both as a receptor for the preprotein-SecB complex and as an ATP-driven molecular motor driving the stepwise translocation of polypeptide chains across the membrane. The chain is Protein translocase subunit SecA from Xylella fastidiosa (strain 9a5c).